The following is a 232-amino-acid chain: Phosphatidylserine decarboxylase proenzyme (232 aa).

Ser190 (schiff-base intermediate with substrate; via pyruvic acid) is an active-site residue. Ser190 is modified (pyruvic acid (Ser); by autocatalysis).

This sequence belongs to the phosphatidylserine decarboxylase family. PSD-A subfamily. Heterodimer of a large membrane-associated beta subunit and a small pyruvoyl-containing alpha subunit. Pyruvate serves as cofactor. Is synthesized initially as an inactive proenzyme. Formation of the active enzyme involves a self-maturation process in which the active site pyruvoyl group is generated from an internal serine residue via an autocatalytic post-translational modification. Two non-identical subunits are generated from the proenzyme in this reaction, and the pyruvate is formed at the N-terminus of the alpha chain, which is derived from the carboxyl end of the proenzyme. The post-translation cleavage follows an unusual pathway, termed non-hydrolytic serinolysis, in which the side chain hydroxyl group of the serine supplies its oxygen atom to form the C-terminus of the beta chain, while the remainder of the serine residue undergoes an oxidative deamination to produce ammonia and the pyruvoyl prosthetic group on the alpha chain.

It is found in the cell membrane. It catalyses the reaction a 1,2-diacyl-sn-glycero-3-phospho-L-serine + H(+) = a 1,2-diacyl-sn-glycero-3-phosphoethanolamine + CO2. It participates in phospholipid metabolism; phosphatidylethanolamine biosynthesis; phosphatidylethanolamine from CDP-diacylglycerol: step 2/2. In terms of biological role, catalyzes the formation of phosphatidylethanolamine (PtdEtn) from phosphatidylserine (PtdSer). The sequence is that of Phosphatidylserine decarboxylase proenzyme from Bradyrhizobium diazoefficiens (strain JCM 10833 / BCRC 13528 / IAM 13628 / NBRC 14792 / USDA 110).